The following is a 592-amino-acid chain: Aspartate--tRNA ligase (592 aa).

Position 171 (glutamate 171) interacts with L-aspartate. The interval 195 to 198 (QLFK) is aspartate. Arginine 217 serves as a coordination point for L-aspartate. ATP contacts are provided by residues 217-219 (RDE) and glutamine 226. Histidine 448 is an L-aspartate binding site. Glutamate 482 contributes to the ATP binding site. Position 489 (arginine 489) interacts with L-aspartate. 534–537 (GLDR) is an ATP binding site.

It belongs to the class-II aminoacyl-tRNA synthetase family. Type 1 subfamily. Homodimer.

The protein resides in the cytoplasm. The catalysed reaction is tRNA(Asp) + L-aspartate + ATP = L-aspartyl-tRNA(Asp) + AMP + diphosphate. Catalyzes the attachment of L-aspartate to tRNA(Asp) in a two-step reaction: L-aspartate is first activated by ATP to form Asp-AMP and then transferred to the acceptor end of tRNA(Asp). The chain is Aspartate--tRNA ligase from Vibrio atlanticus (strain LGP32) (Vibrio splendidus (strain Mel32)).